Consider the following 415-residue polypeptide: Mechanosensing system component YbdG (415 aa).

Over 1–24 (MQDLISQVEDLAGIEIDHTTSMVM) the chain is Periplasmic. Residues 25 to 45 (IFGIIFLTAVVVHIILHWVVL) form a helical membrane-spanning segment. The Cytoplasmic segment spans residues 46–67 (RTFEKRAIASSRLWLQIITQNK). Residues 68-88 (LFHRLAFTLQGIIVNIQAVFW) traverse the membrane as a helical segment. At 89–104 (LQKGTEAADILTTCAQ) the chain is on the periplasmic side. Residues 105 to 125 (LWIMMYALLSVFSLLDVILNL) form a helical membrane-spanning segment. The Cytoplasmic segment spans residues 126-148 (AQKFPAASQLPLKGIFQGIKLIG). A helical transmembrane segment spans residues 149–169 (AILVGILMISLLIGQSPAILI). Residues 170–173 (SGLG) are Periplasmic-facing. A helical membrane pass occupies residues 174–194 (AMAAVLMLVFKDPILGLVAGI). Residues 195–415 (QLSANDMLKL…IRSLAGAFKQ (221 aa)) are Cytoplasmic-facing.

The protein belongs to the MscS (TC 1.A.23) family. As to quaternary structure, homoheptamer.

Its subcellular location is the cell inner membrane. Its function is as follows. Functions as a component of a mechanosensing system that transmits signals triggered by external osmotic changes to intracellular factors. The polypeptide is Mechanosensing system component YbdG (ybdG) (Shigella flexneri).